Reading from the N-terminus, the 485-residue chain is Aldehyde dehydrogenase family 3 member A2 (485 aa).

Over 1-463 (MELEVRRVRQ…FLLKRFNKEK (463 aa)) the chain is Cytoplasmic. 185–190 (GNTAVG) provides a ligand contact to NAD(+). Catalysis depends on residues Glu-207 and Cys-241. Position 293 is a phosphoserine (Ser-293). The chain crosses the membrane as a helical span at residues 464-484 (LGLLLLTFLGIVAAVLVKAEY). The Prevents secretion from ER signature appears at 481–484 (KAEY).

Belongs to the aldehyde dehydrogenase family. As to quaternary structure, homodimer.

It is found in the microsome membrane. The protein resides in the endoplasmic reticulum membrane. It carries out the reaction an aldehyde + NAD(+) + H2O = a carboxylate + NADH + 2 H(+). It catalyses the reaction a fatty aldehyde + NAD(+) + H2O = a fatty acid + NADH + 2 H(+). The enzyme catalyses (2E)-hexadecenal + NAD(+) + H2O = (E)-hexadec-2-enoate + NADH + 2 H(+). The catalysed reaction is hexadecanoate + NADH + 2 H(+) = hexadecanal + NAD(+) + H2O. It carries out the reaction 22-oxodocosanoate + NAD(+) + H2O = docosanedioate + NADH + 2 H(+). It catalyses the reaction 2,6,10,14-tetramethylpentadecanal + NAD(+) + H2O = 2,6,10,14-tetramethylpentadecanoate + NADH + 2 H(+). The enzyme catalyses octadecanal + NAD(+) + H2O = octadecanoate + NADH + 2 H(+). The catalysed reaction is dodecanoate + NADH + 2 H(+) = dodecanal + NAD(+) + H2O. It carries out the reaction decanal + NAD(+) + H2O = decanoate + NADH + 2 H(+). It catalyses the reaction tetradecanal + NAD(+) + H2O = tetradecanoate + NADH + 2 H(+). The enzyme catalyses octanal + NAD(+) + H2O = octanoate + NADH + 2 H(+). The catalysed reaction is heptanal + NAD(+) + H2O = heptanoate + NADH + 2 H(+). It carries out the reaction (2E,6E)-farnesal + NAD(+) + H2O = (2E,6E)-farnesoate + NADH + 2 H(+). Functionally, catalyzes the oxidation of medium and long-chain aliphatic aldehydes to fatty acids. Active on a variety of saturated and unsaturated aliphatic aldehydes between 6 and 24 carbons in length. Responsible for conversion of the sphingosine 1-phosphate (S1P) degradation product hexadecenal to hexadecenoic acid. This Pongo abelii (Sumatran orangutan) protein is Aldehyde dehydrogenase family 3 member A2 (ALDH3A2).